A 277-amino-acid polypeptide reads, in one-letter code: NH(3)-dependent NAD(+) synthetase (277 aa).

47 to 54 contacts ATP; it reads GISGGQDS. Asp53 is a Mg(2+) binding site. Arg141 provides a ligand contact to deamido-NAD(+). Thr161 is an ATP binding site. Glu166 is a binding site for Mg(2+). The deamido-NAD(+) site is built by Lys174 and Asp181. Residues Lys190 and Thr212 each coordinate ATP. 261-262 serves as a coordination point for deamido-NAD(+); it reads HK.

The protein belongs to the NAD synthetase family. As to quaternary structure, homodimer.

The catalysed reaction is deamido-NAD(+) + NH4(+) + ATP = AMP + diphosphate + NAD(+) + H(+). It functions in the pathway cofactor biosynthesis; NAD(+) biosynthesis; NAD(+) from deamido-NAD(+) (ammonia route): step 1/1. Its function is as follows. Catalyzes the ATP-dependent amidation of deamido-NAD to form NAD. Uses ammonia as a nitrogen source. The polypeptide is NH(3)-dependent NAD(+) synthetase (Lactobacillus johnsonii (strain CNCM I-12250 / La1 / NCC 533)).